Here is a 718-residue protein sequence, read N- to C-terminus: DNA ligase (718 aa).

NAD(+) contacts are provided by residues 44–48, 93–94, and Glu-127; these read DADYD and SL. Lys-129 serves as the catalytic N6-AMP-lysine intermediate. Arg-150, Glu-186, Lys-302, and Lys-326 together coordinate NAD(+). Residues Cys-432, Cys-435, Cys-456, and Cys-462 each coordinate Zn(2+). The region spanning 640–718 is the BRCT domain; it reads TAGSPVAGKT…EDEWLALISG (79 aa).

This sequence belongs to the NAD-dependent DNA ligase family. LigA subfamily. Mg(2+) serves as cofactor. The cofactor is Mn(2+).

The catalysed reaction is NAD(+) + (deoxyribonucleotide)n-3'-hydroxyl + 5'-phospho-(deoxyribonucleotide)m = (deoxyribonucleotide)n+m + AMP + beta-nicotinamide D-nucleotide.. Functionally, DNA ligase that catalyzes the formation of phosphodiester linkages between 5'-phosphoryl and 3'-hydroxyl groups in double-stranded DNA using NAD as a coenzyme and as the energy source for the reaction. It is essential for DNA replication and repair of damaged DNA. The polypeptide is DNA ligase (Rhizobium etli (strain ATCC 51251 / DSM 11541 / JCM 21823 / NBRC 15573 / CFN 42)).